The chain runs to 943 residues: Isoleucine--tRNA ligase (943 aa).

Positions 58 to 68 (PYANGKIHIGH) match the 'HIGH' region motif. Glutamate 567 is an L-isoleucyl-5'-AMP binding site. Positions 608–612 (KMSKS) match the 'KMSKS' region motif. Lysine 611 is an ATP binding site. Zn(2+)-binding residues include cysteine 906, cysteine 909, cysteine 926, and cysteine 929.

This sequence belongs to the class-I aminoacyl-tRNA synthetase family. IleS type 1 subfamily. Monomer. The cofactor is Zn(2+).

It localises to the cytoplasm. It catalyses the reaction tRNA(Ile) + L-isoleucine + ATP = L-isoleucyl-tRNA(Ile) + AMP + diphosphate. In terms of biological role, catalyzes the attachment of isoleucine to tRNA(Ile). As IleRS can inadvertently accommodate and process structurally similar amino acids such as valine, to avoid such errors it has two additional distinct tRNA(Ile)-dependent editing activities. One activity is designated as 'pretransfer' editing and involves the hydrolysis of activated Val-AMP. The other activity is designated 'posttransfer' editing and involves deacylation of mischarged Val-tRNA(Ile). This Pseudomonas entomophila (strain L48) protein is Isoleucine--tRNA ligase.